Reading from the N-terminus, the 529-residue chain is Aldehyde dehydrogenase 1 (529 aa).

251–256 is an NAD(+) binding site; the sequence is GSTYVG. Active-site residues include Glu-273 and Cys-307.

This sequence belongs to the aldehyde dehydrogenase family.

The enzyme catalyses an aldehyde + NAD(+) + H2O = a carboxylate + NADH + 2 H(+). This chain is Aldehyde dehydrogenase 1, found in Entamoeba histolytica (strain ATCC 30459 / HM-1:IMSS / ABRM).